A 934-amino-acid polypeptide reads, in one-letter code: Complement component C6 (934 aa).

The first 21 residues, 1 to 21 (MTRHLTLCFILLVMLIDKSEA), serve as a signal peptide directing secretion. 11 disulfides stabilise this stretch: Cys-22/Cys-61, Cys-24/Cys-65, Cys-35/Cys-73, Cys-39/Cys-78, Cys-82/Cys-117, Cys-93/Cys-127, Cys-96/Cys-133, Cys-140/Cys-151, Cys-146/Cys-164, Cys-158/Cys-173, and Cys-180/Cys-218. TSP type-1 domains follow at residues 22 to 79 (CFCD…QTCP) and 81 to 134 (NCVL…KLCK). An LDL-receptor class A domain is found at 138 to 175 (TNCKNKFLCDSGRCIPSKLECNGENDCGDNSDERNCGR). Residues Leu-156, Asn-159, Glu-161, Asp-163, Asp-169, and Glu-170 each contribute to the Ca(2+) site. The 347-residue stretch at 176–522 (TKPVCTRIYT…EYAAKFDPCQ (347 aa)) folds into the MACPF domain. A beta stranded membrane pass occupies residues 278–290 (FFPIPIFHFSEKN). Asn-324 carries N-linked (GlcNAc...) asparagine glycosylation. Disulfide bonds link Cys-399/Cys-420, Cys-499/Cys-623, Cys-521/Cys-570, Cys-523/Cys-539, Cys-526/Cys-541, Cys-543/Cys-552, Cys-577/Cys-611, Cys-589/Cys-601, Cys-644/Cys-686, Cys-672/Cys-699, Cys-704/Cys-746, Cys-732/Cys-761, Cys-773/Cys-823, Cys-784/Cys-801, Cys-786/Cys-837, and Cys-793/Cys-816. The chain crosses the membrane as a beta stranded span at residues 402–415 (YETKKLKFLYMEIH). One can recognise an EGF-like domain in the interval 523–553 (CAPCPNNGRPRLSGTECLCVCQSGTYGENCE). Residues 565–612 (DGNWGCWSSWSACNAAYRRSRTRECNNPAPQRGGQSCGGKDQQEEDCT) form the TSP type-1 3 domain. 2 CCP regions span residues 611–688 (CTVS…RCLP) and 689–765 (DRTW…EQAI). Sushi domains are found at residues 642–701 (SGCS…ECQR) and 702–763 (TSCL…TCEQ). The segment at 642-934 (SGCSQPPLPE…EILNPGRCPD (293 aa)) is C5b-binding domain. Residues 766 to 840 (LTKSKDLCPP…FVHSGSCQEG (75 aa)) are factor I module (FIM) 1. Residues 785-839 (ICMSPEEDCSAYSEDLCIFDGGSSQYFTSSACKFLAGKCLNNTQSHFVHSGSCQE) enclose the Kazal-like 1 domain. Residues Asn-825, Asn-855, and Asn-872 are each glycosylated (N-linked (GlcNAc...) asparagine). The segment at 858–934 (KRVSCGYNTC…EILNPGRCPD (77 aa)) is factor I module (FIM) 2. Disulfide bonds link Cys-862–Cys-873, Cys-867–Cys-919, Cys-880–Cys-897, Cys-882–Cys-932, and Cys-888–Cys-912. Residues 876 to 934 (HTSNCVCLLPPQCSKDENQLYCVKIGSSMREKTVNICTLGAVRCANIKVEILNPGRCPD) form the Kazal-like 2 domain.

It belongs to the complement C6/C7/C8/C9 family. Component of the membrane attack complex (MAC), composed of complement C5b, C6, C7, C8A, C8B, C8G and multiple copies of the pore-forming subunit C9. Post-translationally, all cysteine residues are assumed to be cross-linked to one another. Individual modules containing an even number of conserved cysteine residues are supposed to have disulfide linkages only within the same module.

The protein localises to the secreted. It is found in the target cell membrane. Its activity is regulated as follows. Membrane attack complex (MAC) assembly is inhibited by CD59, thereby protecting self-cells from damage during complement activation. MAC assembly is also inhibited by clusterin (CLU) chaperones that inhibit polymerization of C9. Component of the membrane attack complex (MAC), a multiprotein complex activated by the complement cascade, which inserts into a target cell membrane and forms a pore, leading to target cell membrane rupture and cell lysis. The MAC is initiated by proteolytic cleavage of C5 into complement C5b in response to the classical, alternative, lectin and GZMK complement pathways. The complement pathways consist in a cascade of proteins that leads to phagocytosis and breakdown of pathogens and signaling that strengthens the adaptive immune system. Together with component C5b, involved in MAC complex assembly: complement C5b and C6 associate with the outer leaflet of target cell membrane, reducing the energy for membrane bending. This chain is Complement component C6, found in Mus musculus (Mouse).